The chain runs to 531 residues: Acid-sensing ion channel 3 (531 aa).

Residues 1–43 lie on the Cytoplasmic side of the membrane; the sequence is MKPTSGPEEARRPASDIRVFASNCSMHGLGHVFGPGSLSLRRG. A helical membrane pass occupies residues 44 to 61; sequence MWAAAVVLSVATFLYQVA. Residues 62-441 lie on the Extracellular side of the membrane; sequence ERVRYYREFH…SELLGDIGGQ (380 aa). Intrachain disulfides connect cysteine 92–cysteine 186, cysteine 164–cysteine 171, cysteine 282–cysteine 370, cysteine 315–cysteine 366, cysteine 319–cysteine 364, cysteine 328–cysteine 350, and cysteine 330–cysteine 342. A glycan (N-linked (GlcNAc...) asparagine) is linked at asparagine 175. The tract at residues 285–307 is disordered; the sequence is ASLNPNYEPEPSDPLGSPSPSPS. Asparagine 398 carries an N-linked (GlcNAc...) asparagine glycan. A helical transmembrane segment spans residues 442-460; it reads MGLFIGASLLTILEILDYL. A GAS motif; ion selectivity filter motif is present at residues 447-449; sequence GAS. The Cytoplasmic portion of the chain corresponds to 461-531; that stretch reads CEVFRDKVLG…HRTCYLVTQL (71 aa). Positions 528–531 match the PDZ-binding motif; sequence VTQL.

It belongs to the amiloride-sensitive sodium channel (TC 1.A.6) family. ASIC3 subfamily. As to quaternary structure, can form homotrimeric channels. Heterotrimer; forms functional heterotrimers producing channel with different properties. Forms heterotrimers with ASIC2; gives rise to a biphasic current with a sustained current which discriminates poorly between Na(+) and K(+). Interacts with STOM; inhibits ASIC3 acid-evoked current. Interacts with LIN7B (via PDZ domain); increases ASIC3 expression at the plasma membrane. Interacts with MAGI1 (via PDZ domain); probably regulates ASIC3. Interacts with GOPC (via PDZ domain); probably regulates ASIC3. Interacts with DLG4 (via PDZ domain); reduces ASIC3 expression at the plasma membrane. As to expression, expressed by sensory neurons. Strongly expressed in brain, spinal cord, lung, lymph nodes, kidney, pituitary, heart and testis.

It localises to the cell membrane. The protein resides in the cytoplasm. It carries out the reaction Na(+)(in) = Na(+)(out). It catalyses the reaction K(+)(in) = K(+)(out). The catalysed reaction is Ca(2+)(in) = Ca(2+)(out). Inhibited by the diuretic drug amiloride. Inhibited by the diuretic drug triamterene. Potentiated by the vertebrate neuropeptide FF (NPFF) and the related FMRFamide. Specifically and reversibly inhibited by the a sea anemone toxin APETx2. Its function is as follows. Forms pH-gated heterotrimeric sodium channels that act as postsynaptic excitatory receptors in the nervous system. Upon extracellular acidification, these channels generate a biphasic current with a fast inactivating and a slow sustained phase. ASIC3 is more sensitive to protons and gates between closed, open, and desensitized states faster than other ASICs. Displays high selectivity for sodium ions but can also permit the permeation of other cations. As a neuronal acid sensor, probably contributes to mechanoreception, acid nociception, and heat nociception. By forming heterotrimeric channels with ASIC2, generates a biphasic current with a fast inactivating and a slow sustained phase, which in sensory neurons is proposed to mediate the pain induced by acidosis that occurs in ischemic, damaged or inflamed tissues. This is Acid-sensing ion channel 3 from Homo sapiens (Human).